Consider the following 354-residue polypeptide: Rhodopsin (354 aa).

Residues 1–36 are Extracellular-facing; it reads MNGTEGPNFYVPFSNKSGVVRSPFEYPQYYLAEPWQ. 2 N-linked (GlcNAc...) asparagine glycosylation sites follow: Asn-2 and Asn-15. A helical membrane pass occupies residues 37-61; the sequence is YSVLAAYMFLLILLGFPVNFLTLYV. Residues 62-73 are Cytoplasmic-facing; the sequence is TIQHKKLRTPLN. Residues 74-96 traverse the membrane as a helical segment; sequence YILLNLAFANHFMVFGGFPVTMY. The Extracellular segment spans residues 97–110; the sequence is SSMHGYFVFGQTGC. Residues Cys-110 and Cys-187 are joined by a disulfide bond. The chain crosses the membrane as a helical span at residues 111–133; sequence YIEGFFATMGGEIALWSLVVLAI. A 'Ionic lock' involved in activated form stabilization motif is present at residues 134–136; that stretch reads ERY. The Cytoplasmic segment spans residues 134–152; it reads ERYVVVCKPMSNFRFGENH. The helical transmembrane segment at 153-173 threads the bilayer; sequence AIMGVMMTWIMALACAAPPLF. Over 174 to 202 the chain is Extracellular; it reads GWSRYIPEGMQCSCGVDYYTLKPEVNNES. The chain crosses the membrane as a helical span at residues 203 to 224; sequence FVIYMFLVHFTIPLMIIFFCYG. Residues 225-252 lie on the Cytoplasmic side of the membrane; the sequence is RLVCTVKEAAAQQQESATTQKAEKEVTR. A helical transmembrane segment spans residues 253–274; the sequence is MVIIMVVAFLICWVPYASVAFY. Over 275–286 the chain is Extracellular; sequence IFSNQGTDFGPI. A helical membrane pass occupies residues 287–308; it reads FMTVPAFFAKSSAIYNPVIYIV. Lys-296 carries the post-translational modification N6-(retinylidene)lysine. The Cytoplasmic segment spans residues 309–354; that stretch reads LNKQFRNCMITTICCGKNPFGDDETTSAATSKTEASSVSSSQVSPA. 2 S-palmitoyl cysteine lipidation sites follow: Cys-322 and Cys-323. Residues 332-354 form a disordered region; it reads ETTSAATSKTEASSVSSSQVSPA. Residues 334-354 are compositionally biased toward low complexity; that stretch reads TSAATSKTEASSVSSSQVSPA.

Belongs to the G-protein coupled receptor 1 family. Opsin subfamily. Contains one covalently linked retinal chromophore. Upon light absorption, the covalently bound 11-cis-retinal is converted to all-trans-retinal. After hydrolysis of the Schiff base and release of the covalently bound all-trans-retinal, active rhodopsin is regenerated by binding of a fresh molecule of 11-cis-retinal.

Its subcellular location is the membrane. The protein localises to the cell projection. It localises to the cilium. The protein resides in the photoreceptor outer segment. Its function is as follows. Photoreceptor required for image-forming vision at low light intensity. Required for photoreceptor cell viability after birth. Light-induced isomerization of 11-cis to all-trans retinal triggers a conformational change that activates signaling via G-proteins. Subsequent receptor phosphorylation mediates displacement of the bound G-protein alpha subunit by arrestin and terminates signaling. The polypeptide is Rhodopsin (RHO) (Ambystoma tigrinum (Eastern tiger salamander)).